We begin with the raw amino-acid sequence, 292 residues long: UDP-N-acetylenolpyruvoylglucosamine reductase (292 aa).

Positions 21 to 186 (QAGGLVDYLA…ISATFELQPD (166 aa)) constitute an FAD-binding PCMH-type domain. Residue Arg165 is part of the active site. Catalysis depends on Ser215, which acts as the Proton donor. The active site involves Glu285.

Belongs to the MurB family. The cofactor is FAD.

Its subcellular location is the cytoplasm. It catalyses the reaction UDP-N-acetyl-alpha-D-muramate + NADP(+) = UDP-N-acetyl-3-O-(1-carboxyvinyl)-alpha-D-glucosamine + NADPH + H(+). The protein operates within cell wall biogenesis; peptidoglycan biosynthesis. In terms of biological role, cell wall formation. In Leuconostoc mesenteroides subsp. mesenteroides (strain ATCC 8293 / DSM 20343 / BCRC 11652 / CCM 1803 / JCM 6124 / NCDO 523 / NBRC 100496 / NCIMB 8023 / NCTC 12954 / NRRL B-1118 / 37Y), this protein is UDP-N-acetylenolpyruvoylglucosamine reductase.